The primary structure comprises 249 residues: MAALRVQPEAQAKVDVFREDLCTKTENLLGSYFPKKISELDAFLKEPALNEANLSNLKAPLDIPVPDPVKEKEKEERKKQQEKEDKDEKKKGEDEDKGPPCGPVNCNEKIVVLLQRLKPEIKDVIEQLNLVTTWLQLQIPRIEDGNNFGVAVQEKVFELMTALHTKLEGFHTQISKYFSERGDAVAKAAKQPHVGDYRQLVHELDEAEYRDIRLMVMEIRNAYAVLYDIILKNFEKLKKPRGETKGMIY.

The disordered stretch occupies residues 60–102; the sequence is PLDIPVPDPVKEKEKEERKKQQEKEDKDEKKKGEDEDKGPPCG. The span at 68 to 98 shows a compositional bias: basic and acidic residues; the sequence is PVKEKEKEERKKQQEKEDKDEKKKGEDEDKG.

It belongs to the PA28 family. As to quaternary structure, heterodimer of PSME1 and PSME2, which forms a hexameric ring. PSME1 can form homoheptamers.

Implicated in immunoproteasome assembly and required for efficient antigen processing. The PA28 activator complex enhances the generation of class I binding peptides by altering the cleavage pattern of the proteasome. This is Proteasome activator complex subunit 1 (PSME1) from Sus scrofa (Pig).